The primary structure comprises 474 residues: Replication-associated protein (474 aa).

The Nuclear localization signal motif lies at 248–255; the sequence is GKRFQEDR. A disordered region spans residues 455-474; that stretch reads AFAPGFSLTSEPEPKRRRFF.

It is found in the host nucleus. Its function is as follows. Plays an essential for the replication of viral DNA. Presumably cleaves viral genomic dsRNA replicative form to initiate rolling circle replication. This is Replication-associated protein from Avon-Heathcote Estuary associated kieseladnavirus (AHEaBV).